Consider the following 646-residue polypeptide: Peptidylprolyl isomerase domain and WD repeat-containing protein 1 (646 aa).

Positions 1 to 30 are disordered; that stretch reads MAAESGSDFQQRRRRRRDPEEPEKTELSER. N-acetylalanine is present on Ala2. Residues 17–30 are compositionally biased toward basic and acidic residues; the sequence is RDPEEPEKTELSER. 4 WD repeats span residues 88-126, 131-170, 221-260, and 278-319; these read MHRDVITHVVCTKTDFIITASHDGHVKFWKKIEEGIEFV, SHLGVIECIAVSSEGALFCSVGDDKAMKVFDVVNFDMINM, LHTSPLTQIRLNPVYKAVVSSDKSGMIEYWTGPPHEYKFP, and KCKA…RVFD. Residues 455-478 are compositionally biased toward basic and acidic residues; the sequence is EPEDTKSADSDRDVFNEKPSKEEV. The interval 455–490 is disordered; the sequence is EPEDTKSADSDRDVFNEKPSKEEVMAATQAEGPKRV. One can recognise a PPIase cyclophilin-type domain in the interval 490–645; it reads VSDSAIIHTS…EDVSIINITV (156 aa).

Belongs to the cyclophilin-type PPIase family. PPIL1 subfamily. In terms of assembly, identified in the spliceosome C complex.

Its subcellular location is the nucleus. The catalysed reaction is [protein]-peptidylproline (omega=180) = [protein]-peptidylproline (omega=0). With respect to regulation, inhibited by cyclosporin A (CsA). In terms of biological role, PPIase that catalyzes the cis-trans isomerization of proline imidic peptide bonds in oligopeptides and may therefore assist protein folding. May be involved in pre-mRNA splicing. This Pongo abelii (Sumatran orangutan) protein is Peptidylprolyl isomerase domain and WD repeat-containing protein 1.